The following is a 2648-amino-acid chain: E3 ubiquitin-protein ligase hecd-1 (2648 aa).

ANK repeat units lie at residues 374-403 (VGQS…DVNK) and 405-434 (HKSS…NPDL). The segment covering 433–455 (DLRDEDGKTALDKARERSDDDHN) has biased composition (basic and acidic residues). Disordered stretches follow at residues 433-494 (DLRD…ELPN), 645-714 (PMEI…KATA), and 1376-1400 (DPPK…ALPP). Composition is skewed to polar residues over residues 478-489 (ASTSKQPGTSTK), 652-661 (NQPSSSTAVP), and 670-688 (TVPS…NPST). 2 stretches are compositionally biased toward low complexity: residues 696–714 (SSTP…KATA) and 1383–1400 (PAGT…ALPP). Positions 1438–1510 (RSRGSYKISE…NFDIERVTST (73 aa)) constitute an MIB/HERC2 domain. Disordered stretches follow at residues 1538–1562 (YTPK…GSSR), 1575–1629 (KNTT…SLQH), 1652–1796 (NQEP…LLGG), and 1811–1836 (ESLS…GKKP). Low complexity-rich tracts occupy residues 1543–1562 (TGGP…GSSR) and 1575–1586 (KNTTPAGTPSSG). Residues 1610–1629 (TSGPSVASTGQAASAESLQH) are compositionally biased toward polar residues. Residues 1653 to 1666 (QEPEDEPMGGEESD) show a composition bias toward acidic residues. Over residues 1667–1696 (SAASMRSAASSNSQMSMGSSSQQQQQQDSD) the composition is skewed to low complexity. Composition is skewed to acidic residues over residues 1736–1746 (TDGDADADETN) and 1756–1783 (DAME…DESS). The segment covering 1812 to 1823 (SLSDASSSAKDA) has biased composition (low complexity). In terms of domain architecture, HECT spans 2240–2648 (FHADRKAVLE…AINEKGFHLN (409 aa)). Cysteine 2617 functions as the Glycyl thioester intermediate in the catalytic mechanism.

This sequence belongs to the UPL family. K-HECT subfamily. As to expression, expressed in most tissues, including hypodermis, muscle, intestine, vulva, and neurons.

The enzyme catalyses S-ubiquitinyl-[E2 ubiquitin-conjugating enzyme]-L-cysteine + [acceptor protein]-L-lysine = [E2 ubiquitin-conjugating enzyme]-L-cysteine + N(6)-ubiquitinyl-[acceptor protein]-L-lysine.. It participates in protein modification; protein ubiquitination. Its function is as follows. E3 ubiquitin-protein ligase which accepts ubiquitin from an E2 ubiquitin-conjugating enzyme in the form of a thioester and then directly transfers the ubiquitin to targeted substrates. Involved in the ubiquitination and proteasomal-mediated degradation of cytoplasmic and mitochondrial proteins. Positively regulates lin-12 activity in the anchor cell (AC)/vulval precursor (VU) cell fate decision. Negatively regulates glp-1 activity in germline proliferation. May play a role in the formation of fibrous organelles, a hemidesmosome-like structure attaching muscles to the epidermis. Regulates germline DNA double-strand-break repair and apoptosis in response to DNA damage by recruiting E4 ubiquitin-protein ligase ufd-2 to DNA repair foci. The sequence is that of E3 ubiquitin-protein ligase hecd-1 from Caenorhabditis elegans.